The chain runs to 462 residues: ATP synthase subunit beta (462 aa).

Residue 151–158 (GGAGVGKT) coordinates ATP.

The protein belongs to the ATPase alpha/beta chains family. In terms of assembly, F-type ATPases have 2 components, CF(1) - the catalytic core - and CF(0) - the membrane proton channel. CF(1) has five subunits: alpha(3), beta(3), gamma(1), delta(1), epsilon(1). CF(0) has three main subunits: a(1), b(2) and c(9-12). The alpha and beta chains form an alternating ring which encloses part of the gamma chain. CF(1) is attached to CF(0) by a central stalk formed by the gamma and epsilon chains, while a peripheral stalk is formed by the delta and b chains.

It localises to the cell inner membrane. It carries out the reaction ATP + H2O + 4 H(+)(in) = ADP + phosphate + 5 H(+)(out). Produces ATP from ADP in the presence of a proton gradient across the membrane. The catalytic sites are hosted primarily by the beta subunits. This is ATP synthase subunit beta from Chlorobaculum parvum (strain DSM 263 / NCIMB 8327) (Chlorobium vibrioforme subsp. thiosulfatophilum).